A 316-amino-acid polypeptide reads, in one-letter code: DDRGK domain-containing protein 1 (316 aa).

Residues 1-3 lie on the Lumenal side of the membrane; that stretch reads MVE. Residues 4-24 form a helical membrane-spanning segment; the sequence is LDYLFLGSVGFLTIALMLIIL. Residues 25-316 are Cytoplasmic-facing; that stretch reads RIIKLYFDEK…VEHVSELTAA (292 aa). The interval 147–187 is disordered; it reads LEQEKEKRLQKEREKQMEQEEEERKRKCREREEREKREEEE.

Belongs to the DDRGK1 family.

It localises to the endoplasmic reticulum membrane. Functionally, substrate adapter for ufmylation, the covalent attachment of the ubiquitin-like modifier UFM1 to substrate proteins. The protein is DDRGK domain-containing protein 1 of Brugia malayi (Filarial nematode worm).